We begin with the raw amino-acid sequence, 365 residues long: Protein-glutamate methylesterase/protein-glutamine glutaminase 2 (365 aa).

One can recognise a Response regulatory domain in the interval 6 to 123 (RVLIIDDSAS…ADSLSDDAMR (118 aa)). Position 57 is a 4-aspartylphosphate (Asp-57). The 187-residue stretch at 173–359 (AKTTEMVVCV…PLDQIAREVL (187 aa)) folds into the CheB-type methylesterase domain. Residues Ser-185, His-211, and Asp-307 contribute to the active site.

Belongs to the CheB family. Phosphorylated by CheA. Phosphorylation of the N-terminal regulatory domain activates the methylesterase activity.

Its subcellular location is the cytoplasm. The enzyme catalyses [protein]-L-glutamate 5-O-methyl ester + H2O = L-glutamyl-[protein] + methanol + H(+). It catalyses the reaction L-glutaminyl-[protein] + H2O = L-glutamyl-[protein] + NH4(+). Its function is as follows. Involved in chemotaxis. Part of a chemotaxis signal transduction system that modulates chemotaxis in response to various stimuli. Catalyzes the demethylation of specific methylglutamate residues introduced into the chemoreceptors (methyl-accepting chemotaxis proteins or MCP) by CheR. Also mediates the irreversible deamidation of specific glutamine residues to glutamic acid. The sequence is that of Protein-glutamate methylesterase/protein-glutamine glutaminase 2 from Rhizobium johnstonii (strain DSM 114642 / LMG 32736 / 3841) (Rhizobium leguminosarum bv. viciae).